The primary structure comprises 178 residues: Large ribosomal subunit protein uL6 (178 aa).

The protein belongs to the universal ribosomal protein uL6 family. As to quaternary structure, part of the 50S ribosomal subunit.

In terms of biological role, this protein binds to the 23S rRNA, and is important in its secondary structure. It is located near the subunit interface in the base of the L7/L12 stalk, and near the tRNA binding site of the peptidyltransferase center. The polypeptide is Large ribosomal subunit protein uL6 (Listeria innocua serovar 6a (strain ATCC BAA-680 / CLIP 11262)).